Consider the following 185-residue polypeptide: Elongation factor P (185 aa).

The protein belongs to the elongation factor P family.

It localises to the cytoplasm. Its pathway is protein biosynthesis; polypeptide chain elongation. In terms of biological role, involved in peptide bond synthesis. Stimulates efficient translation and peptide-bond synthesis on native or reconstituted 70S ribosomes in vitro. Probably functions indirectly by altering the affinity of the ribosome for aminoacyl-tRNA, thus increasing their reactivity as acceptors for peptidyl transferase. The chain is Elongation factor P from Carboxydothermus hydrogenoformans (strain ATCC BAA-161 / DSM 6008 / Z-2901).